The chain runs to 522 residues: Calcium-dependent protein kinase 14 (522 aa).

2 stretches are compositionally biased toward low complexity: residues 1–12 (MGNCCPPGSSSE) and 19–45 (SSGS…AAPA). The segment at 1 to 58 (MGNCCPPGSSSEPDPPPASSGSSRPAGSAGAAASPATISPSAAPAPAKPPAPIGPVLG) is disordered. A lipid anchor (N-myristoyl glycine) is attached at Gly2. Residues 68–326 (YTVGKELGRG…AYDVLNHPWI (259 aa)) enclose the Protein kinase domain. ATP contacts are provided by residues 74-82 (LGRGQFGVT) and Lys97. The active-site Proton acceptor is the Asp192. Residues 332–362 (APDTPLDNAVLGRLKQFRAMNQFKKAALRVI) form an autoinhibitory domain region. EF-hand domains are found at residues 369-404 (EEIR…KGTK), 405-440 (LTEA…MNRM), 441-476 (DREE…KGLM), and 480-511 (EIKD…GDPE). 20 residues coordinate Ca(2+): Asp382, Asp384, Ser386, Thr388, Glu393, Asp418, Asp420, Asn422, Thr424, Glu429, Asp454, Asp456, Ser458, Tyr460, Glu465, Asp489, Asp491, Asp493, Arg495, and Glu500.

The protein belongs to the protein kinase superfamily. Ser/Thr protein kinase family. CDPK subfamily.

The protein resides in the membrane. It carries out the reaction L-seryl-[protein] + ATP = O-phospho-L-seryl-[protein] + ADP + H(+). The catalysed reaction is L-threonyl-[protein] + ATP = O-phospho-L-threonyl-[protein] + ADP + H(+). With respect to regulation, activated by calcium. Autophosphorylation may play an important role in the regulation of the kinase activity. Functionally, may play a role in signal transduction pathways that involve calcium as a second messenger. The protein is Calcium-dependent protein kinase 14 of Oryza sativa subsp. japonica (Rice).